Consider the following 405-residue polypeptide: Tryptophan synthase beta chain (405 aa).

Lys98 bears the N6-(pyridoxal phosphate)lysine mark.

The protein belongs to the TrpB family. Tetramer of two alpha and two beta chains. Requires pyridoxal 5'-phosphate as cofactor.

It carries out the reaction (1S,2R)-1-C-(indol-3-yl)glycerol 3-phosphate + L-serine = D-glyceraldehyde 3-phosphate + L-tryptophan + H2O. It functions in the pathway amino-acid biosynthesis; L-tryptophan biosynthesis; L-tryptophan from chorismate: step 5/5. In terms of biological role, the beta subunit is responsible for the synthesis of L-tryptophan from indole and L-serine. The protein is Tryptophan synthase beta chain of Xanthomonas campestris pv. campestris (strain 8004).